A 230-amino-acid polypeptide reads, in one-letter code: Cytidylate kinase (230 aa).

ATP is bound at residue 12 to 20 (GPSGAGKGT).

It belongs to the cytidylate kinase family. Type 1 subfamily.

It is found in the cytoplasm. It carries out the reaction CMP + ATP = CDP + ADP. The catalysed reaction is dCMP + ATP = dCDP + ADP. The polypeptide is Cytidylate kinase (Yersinia enterocolitica serotype O:8 / biotype 1B (strain NCTC 13174 / 8081)).